Consider the following 581-residue polypeptide: Putative phospholipase B-like 3 (581 aa).

The N-terminal stretch at 1-16 (MKLLFFLFGLIFAVEQ) is a signal peptide. N-linked (GlcNAc...) asparagine glycans are attached at residues Asn-50, Asn-82, Asn-132, Asn-169, Asn-215, Asn-309, Asn-543, Asn-546, and Asn-560.

It belongs to the phospholipase B-like family.

It localises to the secreted. Functionally, putative phospholipase. This is Putative phospholipase B-like 3 from Caenorhabditis elegans.